The primary structure comprises 213 residues: Orotate phosphoribosyltransferase (213 aa).

Lysine 26 provides a ligand contact to 5-phospho-alpha-D-ribose 1-diphosphate. 34–35 (FF) is an orotate binding site. Residues 72–73 (YK), arginine 98, lysine 99, lysine 102, histidine 104, and 123–131 (DDVISAGTS) each bind 5-phospho-alpha-D-ribose 1-diphosphate. Orotate-binding residues include serine 127 and arginine 155.

The protein belongs to the purine/pyrimidine phosphoribosyltransferase family. PyrE subfamily. As to quaternary structure, homodimer. Mg(2+) is required as a cofactor.

The catalysed reaction is orotidine 5'-phosphate + diphosphate = orotate + 5-phospho-alpha-D-ribose 1-diphosphate. It functions in the pathway pyrimidine metabolism; UMP biosynthesis via de novo pathway; UMP from orotate: step 1/2. Catalyzes the transfer of a ribosyl phosphate group from 5-phosphoribose 1-diphosphate to orotate, leading to the formation of orotidine monophosphate (OMP). In Neisseria meningitidis serogroup A / serotype 4A (strain DSM 15465 / Z2491), this protein is Orotate phosphoribosyltransferase.